A 124-amino-acid chain; its full sequence is UPF0102 protein Blon_1698/BLIJ_1758 (124 aa).

It belongs to the UPF0102 family.

In Bifidobacterium longum subsp. infantis (strain ATCC 15697 / DSM 20088 / JCM 1222 / NCTC 11817 / S12), this protein is UPF0102 protein Blon_1698/BLIJ_1758.